Reading from the N-terminus, the 88-residue chain is uncharacterized protein (88 aa).

This is an uncharacterized protein from Vaccinia virus (strain Copenhagen) (VACV).